The chain runs to 321 residues: PI-PLC X domain-containing protein 3 (321 aa).

Residues 22–197 (SIHSIPLTNL…DYQVLVFYHS (176 aa)) form the PI-PLC X-box domain. Catalysis depends on residues His-37 and His-114.

In terms of tissue distribution, widely expressed, with highest levels in brain, followed by heart atrium. Not detected in small intestine, nor stomach.

It is found in the cytoplasm. The protein is PI-PLC X domain-containing protein 3 (Plcxd3) of Mus musculus (Mouse).